Reading from the N-terminus, the 220-residue chain is Large ribosomal subunit protein uL16 (220 aa).

Belongs to the universal ribosomal protein uL16 family. As to quaternary structure, component of the small ribosomal subunit. Mature ribosomes consist of a small (40S) and a large (60S) subunit. The 40S subunit contains about 33 different proteins and 1 molecule of RNA (18S). The 60S subunit contains about 49 different proteins and 3 molecules of RNA (25S, 5.8S and 5S).

The chain is Large ribosomal subunit protein uL16 (RPL10) from Zea mays (Maize).